We begin with the raw amino-acid sequence, 189 residues long: uncharacterized protein (189 aa).

A compositionally biased stretch (basic and acidic residues) spans 1 to 15; it reads MDKHGVKTPLWRKEV. The tract at residues 1–77 is disordered; that stretch reads MDKHGVKTPL…SPLRQESSSQ (77 aa). 2 stretches are compositionally biased toward acidic residues: residues 16–29 and 46–56; these read EDPEAREEDLEDDS and SATETEEDSRD. Positions 65 to 77 are enriched in polar residues; sequence VSYSPLRQESSSQ.

This is an uncharacterized protein from Mus musculus (Mouse).